Reading from the N-terminus, the 427-residue chain is MSGVIVVGSQWGDEGKGKIVDFFAEHADAVVRYQGGNNAGHTIWHGDTKFELSALPSGIVTKGQLAILGNGVVINPEALLAEIKEVESQGVTVENLIISNRAHVIMPYHIALDKASETASNNRIGTTKKGIGPAYTDKISRVGIRVADLIDPEIFGKLLKEYLPFKNAQLTKLYGEEALDYNEIYDKYVEYGRQLAPYVTDTSYLLGQQMKENKRVVFEGAQGVMLDVDHGTYPFVTSSNPTAGGVMNGAGVGPKQIQDVVGVIKAYTSRVGSGPFPTELFNDTADHIREIGHEYGVVTKRPRRIGWLDAVALRHAVQVSGLTKLAINSLDVLSGLKEVKIATSYTYKGEEIHHFPASDTWFQGLDVNFETLPGWDEDITDVTKFDELPINAQNYLKRISELLEVDLLSFAVGPKPEQTHLLRPVWE.

Residues Gly-12–Lys-18 and Gly-40–Thr-42 each bind GTP. The active-site Proton acceptor is the Asp-13. Residues Asp-13 and Gly-40 each coordinate Mg(2+). IMP-binding positions include Asp-13–Lys-16, Asn-38–His-41, Thr-127, Arg-141, Gln-222, Thr-237, and Arg-301. His-41 acts as the Proton donor in catalysis. Residue Val-297–Arg-303 participates in substrate binding. GTP-binding positions include Arg-303, Ser-329 to Asp-331, and Ala-411 to Gly-413.

This sequence belongs to the adenylosuccinate synthetase family. In terms of assembly, homodimer. It depends on Mg(2+) as a cofactor.

The protein resides in the cytoplasm. It carries out the reaction IMP + L-aspartate + GTP = N(6)-(1,2-dicarboxyethyl)-AMP + GDP + phosphate + 2 H(+). The protein operates within purine metabolism; AMP biosynthesis via de novo pathway; AMP from IMP: step 1/2. Plays an important role in the de novo pathway of purine nucleotide biosynthesis. Catalyzes the first committed step in the biosynthesis of AMP from IMP. This chain is Adenylosuccinate synthetase, found in Leuconostoc mesenteroides subsp. mesenteroides (strain ATCC 8293 / DSM 20343 / BCRC 11652 / CCM 1803 / JCM 6124 / NCDO 523 / NBRC 100496 / NCIMB 8023 / NCTC 12954 / NRRL B-1118 / 37Y).